Consider the following 342-residue polypeptide: Isopentenyl-diphosphate delta-isomerase (342 aa).

R11–K12 is a binding site for substrate. FMN-binding positions include S68, S69–T71, S99, and N128. S99–R101 contributes to the substrate binding site. Q162 lines the substrate pocket. E163 is a binding site for Mg(2+). Residues K194, S219, T224, G275–R277, and A296–K297 contribute to the FMN site.

This sequence belongs to the IPP isomerase type 2 family. Homooctamer. Dimer of tetramers. FMN serves as cofactor. It depends on NADPH as a cofactor. Mg(2+) is required as a cofactor.

It is found in the cytoplasm. The catalysed reaction is isopentenyl diphosphate = dimethylallyl diphosphate. Involved in the biosynthesis of isoprenoids. Catalyzes the 1,3-allylic rearrangement of the homoallylic substrate isopentenyl (IPP) to its allylic isomer, dimethylallyl diphosphate (DMAPP). The chain is Isopentenyl-diphosphate delta-isomerase from Legionella pneumophila (strain Lens).